Here is a 127-residue protein sequence, read N- to C-terminus: ATP synthase epsilon chain (127 aa).

Belongs to the ATPase epsilon chain family. As to quaternary structure, F-type ATPases have 2 components, CF(1) - the catalytic core - and CF(0) - the membrane proton channel. CF(1) has five subunits: alpha(3), beta(3), gamma(1), delta(1), epsilon(1). CF(0) has three main subunits: a, b and c.

The protein localises to the cell inner membrane. In terms of biological role, produces ATP from ADP in the presence of a proton gradient across the membrane. In Leptospira borgpetersenii serovar Hardjo-bovis (strain JB197), this protein is ATP synthase epsilon chain.